The sequence spans 326 residues: Biotin synthase (326 aa).

Residues 48-277 enclose the Radical SAM core domain; sequence FGAGKVDLCS…SARIRMAGGR (230 aa). Residues cysteine 66, cysteine 70, and cysteine 73 each contribute to the [4Fe-4S] cluster site. 4 residues coordinate [2Fe-2S] cluster: serine 110, cysteine 142, cysteine 202, and arginine 272.

Belongs to the radical SAM superfamily. Biotin synthase family. In terms of assembly, homodimer. [4Fe-4S] cluster serves as cofactor. [2Fe-2S] cluster is required as a cofactor.

The catalysed reaction is (4R,5S)-dethiobiotin + (sulfur carrier)-SH + 2 reduced [2Fe-2S]-[ferredoxin] + 2 S-adenosyl-L-methionine = (sulfur carrier)-H + biotin + 2 5'-deoxyadenosine + 2 L-methionine + 2 oxidized [2Fe-2S]-[ferredoxin]. The protein operates within cofactor biosynthesis; biotin biosynthesis; biotin from 7,8-diaminononanoate: step 2/2. Its function is as follows. Catalyzes the conversion of dethiobiotin (DTB) to biotin by the insertion of a sulfur atom into dethiobiotin via a radical-based mechanism. This Heliobacterium modesticaldum (strain ATCC 51547 / Ice1) protein is Biotin synthase.